Reading from the N-terminus, the 295-residue chain is MSTKVKKTTQLKQMLNSKDLEFIMEAHNGLSARIVQEAGFKGIWGSGLSVSAQLGVRDSNEASWTQVVEVLEFMSDASDVPILLDADTGYGNFNNARRLVRKLEDRGVAGACLEDKLFPKTNSLHDGRAQPLADIEEFALKIKACKDSQTDPDFCIVARVEAFIAGWGLDEALKRAEAYRNAGADAILMHSKKADPSDIEAFMKAWNNQGPVVIVPTKYYKTPTDHFRDMGVSMVIWANHNLRASVSAIQQTTKQIYDDQSLVNVEDKIVSVKEIFRLQRDDELVQAEDKYLPKN.

Asp-58 acts as the Nucleophile in catalysis. Mg(2+) is bound at residue Asp-58.

The protein belongs to the isocitrate lyase/PEP mutase superfamily. PEP mutase family. As to quaternary structure, homotetramer. Mg(2+) is required as a cofactor.

It catalyses the reaction phosphoenolpyruvate + H(+) = 3-phosphonopyruvate. It functions in the pathway phosphorus metabolism; phosphonate biosynthesis. In terms of biological role, formation of a carbon-phosphorus bond by converting phosphoenolpyruvate (PEP) to phosphonopyruvate (P-Pyr). The protein is Phosphoenolpyruvate phosphomutase of Mytilus edulis (Blue mussel).